Consider the following 670-residue polypeptide: Outer dynein arm-docking complex subunit 1 (670 aa).

3 coiled-coil regions span residues 9–155, 183–224, and 302–381; these read SKEV…RYLN, AVRE…EQLH, and NFIN…IQLL. The segment at 454 to 473 is disordered; it reads KMAPLQPPDTLEDPPGFEAS. Serine 517 bears the Phosphoserine mark. Disordered stretches follow at residues 526 to 596 and 616 to 670; these read AGSS…ASSG and VGSS…DSRG. The span at 584-596 shows a compositional bias: polar residues; it reads GHVTFGSTSASSG. The segment covering 650–670 has biased composition (low complexity); that stretch reads SSTGPASSTGPGSSTSKDSRG.

This sequence belongs to the ODA1/DCC2 family. As to quaternary structure, component of the outer dynein arm-docking complex along with ODAD2, ODAD3, ODAD4 and CLXN. Interacts with ODAD3. Interacts with ODAD4; this interaction may facilitate the recruitment and/or attachment of outer dynein arm docking complex proteins, including ODAD1, ODAD3, and ODAD4 to ciliary axonemes. Interacts with DNAH9. Interacts with MNS1. Interacts with PIERCE1 and PIERCE2; the interactions link the outer dynein arms docking complex (ODA-DC) to the internal microtubule inner proteins (MIP) in cilium axoneme. In terms of tissue distribution, expressed in nasal epithelial cells. Highly expressed in testis and also detected in lung, brain and kidney.

It is found in the cytoplasm. The protein resides in the cytoskeleton. Its subcellular location is the cilium axoneme. Its function is as follows. Component of the outer dynein arm-docking complex (ODA-DC) that mediates outer dynein arms (ODA) binding onto the doublet microtubule. Involved in mediating assembly of both ODAs and their axonemal docking complex onto ciliary microtubules. The polypeptide is Outer dynein arm-docking complex subunit 1 (Homo sapiens (Human)).